A 236-amino-acid chain; its full sequence is EP300-interacting inhibitor of differentiation 2 (236 aa).

A compositionally biased stretch (polar residues) spans 1 to 15 (MSQLPAVSSAPQTGA). The disordered stretch occupies residues 1-102 (MSQLPAVSSA…REGPAAAAAS (102 aa)). Composition is skewed to low complexity over residues 32–68 (RALP…GRVA) and 75–102 (AAAA…AAAS). 2 positions are modified to omega-N-methylarginine: R63 and R79. Residues 170 to 190 (RIQELEERRRRFVEACRAREA) adopt a coiled-coil conformation.

As to quaternary structure, heterodimer with EID2B. Interacts with the C-terminus of EP300. Interacts with HDAC1 and HDAC2. Interacts with SMAD2, SMAD4 and with the MH2 domain of SMAD3. In terms of tissue distribution, expressed in heart, brain, kidney and pancreas. Not detected in placenta.

It localises to the nucleus. In terms of biological role, interacts with EP300 and acts as a repressor of MYOD-dependent transcription and muscle differentiation. Inhibits EP300 histone acetyltransferase activity. Acts as a repressor of TGFB/SMAD transcriptional responses. May act as a repressor of the TGFB/SMAD3-dependent signaling by selectively blocking formation of TGFB-induced SMAD3-SMAD4 complex. The protein is EP300-interacting inhibitor of differentiation 2 of Mus musculus (Mouse).